The primary structure comprises 793 residues: DnaJ homolog subfamily C member 10 (793 aa).

The signal sequence occupies residues Met-1–Thr-32. The region spanning Asn-35–Gly-100 is the J domain. Positions Glu-130–His-232 constitute a Thioredoxin 1 domain. Cys-158 and Cys-161 are joined by a disulfide. 2 trxb regions span residues Ser-235 to Phe-350 and Pro-348 to Phe-463. Thioredoxin domains lie at His-454–Leu-553, Ser-557–Leu-665, and Ala-671–Tyr-776. An intrachain disulfide couples Cys-480 to Cys-483. N-linked (GlcNAc...) asparagine glycosylation occurs at Asn-530. 2 disulfide bridges follow: Cys-588-Cys-591 and Cys-700-Cys-703. A Prevents secretion from ER motif is present at residues Lys-790 to Leu-793.

As to quaternary structure, interacts with HSPA5 (via its J domain). Interacts with EDEM1. As to expression, ubiquitous. Particularly abundant in secretory tissues. Ubiquitous in fetal tissues and tumor tissues. Higher expression in fetal tissues than in adult tissues. Expressed in testis, pancreas, fetal thymus and fetal kidney. High expression in heart, liver, kidney, and testis. Low expression in spleen and skeletal muscle.

It is found in the endoplasmic reticulum lumen. Endoplasmic reticulum disulfide reductase involved both in the correct folding of proteins and degradation of misfolded proteins. Required for efficient folding of proteins in the endoplasmic reticulum by catalyzing the removal of non-native disulfide bonds formed during the folding of proteins, such as LDLR. Also involved in endoplasmic reticulum-associated degradation (ERAD) by reducing incorrect disulfide bonds in misfolded glycoproteins recognized by EDEM1. Interaction with HSPA5 is required its activity, not for the disulfide reductase activity, but to facilitate the release of DNAJC10 from its substrate. Promotes apoptotic signaling pathway in response to endoplasmic reticulum stress. The chain is DnaJ homolog subfamily C member 10 (Dnajc10) from Mus musculus (Mouse).